Consider the following 196-residue polypeptide: Ribosome maturation factor RimP (196 aa).

Residues 164–196 form a disordered region; it reads LAPQKPNKPGPKKPGHDKKKPSNEPAAGKPRAE. The segment covering 173-182 has biased composition (basic residues); the sequence is GPKKPGHDKK.

It belongs to the RimP family.

It is found in the cytoplasm. Functionally, required for maturation of 30S ribosomal subunits. The chain is Ribosome maturation factor RimP from Xanthomonas campestris pv. campestris (strain B100).